The following is a 101-amino-acid chain: Small ribosomal subunit protein uS14 (101 aa).

It belongs to the universal ribosomal protein uS14 family. Part of the 30S ribosomal subunit. Contacts proteins S3 and S10.

Its function is as follows. Binds 16S rRNA, required for the assembly of 30S particles and may also be responsible for determining the conformation of the 16S rRNA at the A site. This is Small ribosomal subunit protein uS14 from Shewanella piezotolerans (strain WP3 / JCM 13877).